The primary structure comprises 340 residues: DNA-directed RNA polymerase subunit alpha (340 aa).

The segment at 1–233 is alpha N-terminal domain (alpha-NTD); the sequence is MYRNWRDLIS…EQLSIFINFD (233 aa). Residues 251-340 form an alpha C-terminal domain (alpha-CTD) region; the sequence is VNENLYRSVD…RIRGERKDEE (90 aa).

Belongs to the RNA polymerase alpha chain family. Homodimer. The RNAP catalytic core consists of 2 alpha, 1 beta, 1 beta' and 1 omega subunit. When a sigma factor is associated with the core the holoenzyme is formed, which can initiate transcription.

The enzyme catalyses RNA(n) + a ribonucleoside 5'-triphosphate = RNA(n+1) + diphosphate. Its function is as follows. DNA-dependent RNA polymerase catalyzes the transcription of DNA into RNA using the four ribonucleoside triphosphates as substrates. The sequence is that of DNA-directed RNA polymerase subunit alpha from Geobacter metallireducens (strain ATCC 53774 / DSM 7210 / GS-15).